Consider the following 316-residue polypeptide: MERLLMNVEEVVTREEFLRLKGGSAYLGFEPLWPIHIGWLIWAYKLAELKEAGFDVIVLVATWHAWINDKGSIEELRAHGERVRAVLDRIGKFKYVYGDDVAKDPKYWELVVKIAKETSLARVKRATPVMGRRAEEVELDFSKLMYPLMQVADIFYLGVDVAVGGMDQRRAHMLARDVAEKLGLKKPIALHTPIITSLSGTGRMEGTHREIDEVYAMYKMSKSKPQSAILITDSEEDVRKKIWAAYCPPRETKFNPVFEIAAYLLIPYHGPLEIKGRRYEEGNALERDYREGVVTPQELKEAVASALVGLLSKLKL.

Residues Tyr-26, Tyr-146, Gln-150, Asp-153, and Gln-168 each coordinate L-tyrosine. The 'KMSKS' region signature appears at 219 to 223 (KMSKS). Lys-222 lines the ATP pocket.

The protein belongs to the class-I aminoacyl-tRNA synthetase family. TyrS type 4 subfamily. Homodimer.

It localises to the cytoplasm. The enzyme catalyses tRNA(Tyr) + L-tyrosine + ATP = L-tyrosyl-tRNA(Tyr) + AMP + diphosphate + H(+). Its function is as follows. Catalyzes the attachment of tyrosine to tRNA(Tyr) in a two-step reaction: tyrosine is first activated by ATP to form Tyr-AMP and then transferred to the acceptor end of tRNA(Tyr). The polypeptide is Tyrosine--tRNA ligase 2 (Pyrobaculum aerophilum (strain ATCC 51768 / DSM 7523 / JCM 9630 / CIP 104966 / NBRC 100827 / IM2)).